A 385-amino-acid chain; its full sequence is MKDEPRSTNLFMKLDSVFIWKEPFGLVLIIAPWNYPLNLTLVLLVGALAAGSCVVLKPSEISQGTEKVLAEVLPQYLDQSCFAVVLGGPQETGQLLEHKLDYIFFTGSPRVGKIVMTAATKHLTPVTLELGGKNPCYVDDNCDPQTVANRVAWFCYFNAGQTCVAPDYVLCSPEMQERLLPALQSTITRFYGDDPQSSPNLGHIINQKQFQRLRALLGCSRVAIGGQSNESDRYIAPTVLVDVQETEPVMQEEIFGPILPIVNVQSVDEAIKFINRQEKPLALYAFSNSSQVVNQMLERTSSGSFGGNEGFTYISLLSVPFGGVGHSGMGRYHGKFTFDTFSHHRTCLLAPSGLEKLKEIHYPPYTDWNQQLLRWGMGSQSCTLL.

107–112 contacts NAD(+); that stretch reads GSPRVG. Catalysis depends on residues glutamate 129 and cysteine 163. Cysteine 382 bears the Cysteine methyl ester mark. Cysteine 382 is lipidated: S-geranylgeranyl cysteine. The propeptide at 383 to 385 is removed in mature form; that stretch reads TLL.

This sequence belongs to the aldehyde dehydrogenase family. In terms of processing, geranylgeranylation is important for localization to lipid droplets and enzyme activity. As to expression, salivary gland. Expressed at protein level in placenta.

The protein localises to the lipid droplet. It catalyses the reaction an aldehyde + NAD(+) + H2O = a carboxylate + NADH + 2 H(+). The enzyme catalyses a long-chain fatty aldehyde + NAD(+) + H2O = a long-chain fatty acid + NADH + 2 H(+). The catalysed reaction is a medium-chain fatty aldehyde + NAD(+) + H2O = a medium-chain fatty acid + NADH + 2 H(+). It carries out the reaction hexadecanoate + NADH + 2 H(+) = hexadecanal + NAD(+) + H2O. It catalyses the reaction octanal + NAD(+) + H2O = octanoate + NADH + 2 H(+). The protein operates within alcohol metabolism; ethanol degradation; acetate from ethanol: step 2/2. Functionally, oxidizes medium and long chain fatty aldehydes in lipid droplets into non-toxic fatty acids. This is Aldehyde dehydrogenase family 3 member B2 (ALDH3B2) from Homo sapiens (Human).